The primary structure comprises 513 residues: MMEIRPAEISDILKQQIATFDTPVDIAETGTILSVGDGIARVYGLQNVQAGEMVEFPGSGQRGMALNLENDNVGVVIFGDDADMREGDTVSRTGAVVEVPTGKALLGRVVDGLGNPIDGKGPLVGDVVMKRADVKAPGIMPRQSVGEPMQTGIKAIDALVPIGRGQRELIIGDRQTGKTAILIDTIVAQKSVNALGDDKKSLYCIYVAIGQKRSTVAQLVRTLEETGAMEYSIVVAATASDPAPMQYLAPYAACAMGEYFRDNGMHALIVYDDLSKQAVAYRQMSLLLRRPPGREAYPGDVFYLHSRLLERAAKMSDEYGAGSLTALPVIETQAGDVSAYIPTNVISITDGQVFLETDLFYRGIRPAVNVGGSVSRVGSAAQIKAMKQVAGKIKLELAQYREMAAFSQFASDLDPATQKQLARGARLVELLKQPETSPLAVEEQVCVLFAGTRGFIDAVPVDKVSSYERQLLAELHTGGKEILESIRTERQITKDNETRLTDFLTSFGRQFAG.

172 to 179 contributes to the ATP binding site; the sequence is GDRQTGKT.

Belongs to the ATPase alpha/beta chains family. In terms of assembly, F-type ATPases have 2 components, CF(1) - the catalytic core - and CF(0) - the membrane proton channel. CF(1) has five subunits: alpha(3), beta(3), gamma(1), delta(1), epsilon(1). CF(0) has three main subunits: a(1), b(2) and c(9-12). The alpha and beta chains form an alternating ring which encloses part of the gamma chain. CF(1) is attached to CF(0) by a central stalk formed by the gamma and epsilon chains, while a peripheral stalk is formed by the delta and b chains.

The protein resides in the cell inner membrane. The enzyme catalyses ATP + H2O + 4 H(+)(in) = ADP + phosphate + 5 H(+)(out). Produces ATP from ADP in the presence of a proton gradient across the membrane. The alpha chain is a regulatory subunit. The protein is ATP synthase subunit alpha of Gluconacetobacter diazotrophicus (strain ATCC 49037 / DSM 5601 / CCUG 37298 / CIP 103539 / LMG 7603 / PAl5).